We begin with the raw amino-acid sequence, 833 residues long: Leucine--tRNA ligase (833 aa).

Positions 41 to 52 (PYPSGAGLHVGH) match the 'HIGH' region motif. The short motif at 610–614 (KMSKS) is the 'KMSKS' region element. Lys613 serves as a coordination point for ATP.

The protein belongs to the class-I aminoacyl-tRNA synthetase family.

The protein resides in the cytoplasm. The enzyme catalyses tRNA(Leu) + L-leucine + ATP = L-leucyl-tRNA(Leu) + AMP + diphosphate. In Streptococcus equi subsp. equi (strain 4047), this protein is Leucine--tRNA ligase.